We begin with the raw amino-acid sequence, 356 residues long: MTKPVADQSLQSLDARSRDIFRLIVESYLQRGEPVGSRNLSRLLPTQLSPATIRNVMSDLEHLGLIYAPHVSAGRLPTQQGLRFFVDAFMEVGDLSEEERRVIEAQIKASGRGQSLDHMLTEASQMLSGLSRGAGLVLAAKTEAPLKHIEFIQLEPRKALAILVSQNGDVENRVIELPAGVTASQLVEASNFLNAHIRGRTLAEAKSEMARLKEETREALDSLSQSLVEQGLAIWAGAESDTPARIIIRGRANLLENVTAQADLELLRHLFDDLETKEALIQLLGLAEEGPGVRIFIGSENKLFSLSGSSLIVAPYRDQDSRVIGALGIIGPTRLNYARIVPMVDYTAQLVGRLLR.

Belongs to the HrcA family.

Functionally, negative regulator of class I heat shock genes (grpE-dnaK-dnaJ and groELS operons). Prevents heat-shock induction of these operons. The polypeptide is Heat-inducible transcription repressor HrcA (Chelativorans sp. (strain BNC1)).